Reading from the N-terminus, the 298-residue chain is Probable endonuclease 4 (298 aa).

H69, H110, E145, D179, H182, H214, D227, H229, and E259 together coordinate Zn(2+).

The protein belongs to the AP endonuclease 2 family. The cofactor is Zn(2+).

It catalyses the reaction Endonucleolytic cleavage to 5'-phosphooligonucleotide end-products.. Functionally, endonuclease IV plays a role in DNA repair. It cleaves phosphodiester bonds at apurinic or apyrimidinic (AP) sites, generating a 3'-hydroxyl group and a 5'-terminal sugar phosphate. In Geobacillus sp. (strain WCH70), this protein is Probable endonuclease 4.